The chain runs to 238 residues: Aspartate/glutamate leucyltransferase (238 aa).

Belongs to the R-transferase family. Bpt subfamily.

The protein resides in the cytoplasm. The catalysed reaction is N-terminal L-glutamyl-[protein] + L-leucyl-tRNA(Leu) = N-terminal L-leucyl-L-glutamyl-[protein] + tRNA(Leu) + H(+). It catalyses the reaction N-terminal L-aspartyl-[protein] + L-leucyl-tRNA(Leu) = N-terminal L-leucyl-L-aspartyl-[protein] + tRNA(Leu) + H(+). Functionally, functions in the N-end rule pathway of protein degradation where it conjugates Leu from its aminoacyl-tRNA to the N-termini of proteins containing an N-terminal aspartate or glutamate. The sequence is that of Aspartate/glutamate leucyltransferase from Shewanella sp. (strain ANA-3).